The chain runs to 270 residues: Putative pyruvate, phosphate dikinase regulatory protein (270 aa).

ADP is bound at residue 151–158 (GVSRTSKT).

It belongs to the pyruvate, phosphate/water dikinase regulatory protein family. PDRP subfamily.

The catalysed reaction is N(tele)-phospho-L-histidyl/L-threonyl-[pyruvate, phosphate dikinase] + ADP = N(tele)-phospho-L-histidyl/O-phospho-L-threonyl-[pyruvate, phosphate dikinase] + AMP + H(+). It catalyses the reaction N(tele)-phospho-L-histidyl/O-phospho-L-threonyl-[pyruvate, phosphate dikinase] + phosphate + H(+) = N(tele)-phospho-L-histidyl/L-threonyl-[pyruvate, phosphate dikinase] + diphosphate. Bifunctional serine/threonine kinase and phosphorylase involved in the regulation of the pyruvate, phosphate dikinase (PPDK) by catalyzing its phosphorylation/dephosphorylation. This is Putative pyruvate, phosphate dikinase regulatory protein from Lysinibacillus sphaericus (strain C3-41).